The sequence spans 392 residues: Chorismate synthase (392 aa).

Positions 40 and 46 each coordinate NADP(+). Residues arginine 135–serine 137, glutamine 256–alanine 257, glycine 300, lysine 315–threonine 319, and arginine 341 contribute to the FMN site.

Belongs to the chorismate synthase family. In terms of assembly, homotetramer. FMNH2 serves as cofactor.

The catalysed reaction is 5-O-(1-carboxyvinyl)-3-phosphoshikimate = chorismate + phosphate. It functions in the pathway metabolic intermediate biosynthesis; chorismate biosynthesis; chorismate from D-erythrose 4-phosphate and phosphoenolpyruvate: step 7/7. In terms of biological role, catalyzes the anti-1,4-elimination of the C-3 phosphate and the C-6 proR hydrogen from 5-enolpyruvylshikimate-3-phosphate (EPSP) to yield chorismate, which is the branch point compound that serves as the starting substrate for the three terminal pathways of aromatic amino acid biosynthesis. This reaction introduces a second double bond into the aromatic ring system. This is Chorismate synthase from Nocardioides sp. (strain ATCC BAA-499 / JS614).